We begin with the raw amino-acid sequence, 116 residues long: Beta-2-microglobulin (116 aa).

The first 19 residues, 1–19 (MKFLLSFVVLAVFSASAFA), serve as a signal peptide directing secretion. Residues 24 to 111 (PKIQVYSRNP…RHLKETKNIS (88 aa)) form the Ig-like C1-type domain. Cysteines 44 and 99 form a disulfide.

This sequence belongs to the beta-2-microglobulin family. In terms of assembly, heterodimer of an alpha chain and a beta chain. Beta-2-microglobulin is the beta-chain of major histocompatibility complex class I molecules.

The protein resides in the secreted. Its function is as follows. Component of the class I major histocompatibility complex (MHC). Involved in the presentation of peptide antigens to the immune system. The protein is Beta-2-microglobulin (b2m) of Ictalurus punctatus (Channel catfish).